The primary structure comprises 264 residues: Thymidylate synthase (264 aa).

R21 is a binding site for dUMP. Residue H51 participates in (6R)-5,10-methylene-5,6,7,8-tetrahydrofolate binding. Residue 126–127 (RR) coordinates dUMP. C146 serves as the catalytic Nucleophile. Residues 166–169 (RSAD), N177, and 207–209 (HLY) each bind dUMP. D169 serves as a coordination point for (6R)-5,10-methylene-5,6,7,8-tetrahydrofolate. A263 serves as a coordination point for (6R)-5,10-methylene-5,6,7,8-tetrahydrofolate.

It belongs to the thymidylate synthase family. Bacterial-type ThyA subfamily. As to quaternary structure, homodimer.

It is found in the cytoplasm. The enzyme catalyses dUMP + (6R)-5,10-methylene-5,6,7,8-tetrahydrofolate = 7,8-dihydrofolate + dTMP. Its pathway is pyrimidine metabolism; dTTP biosynthesis. In terms of biological role, catalyzes the reductive methylation of 2'-deoxyuridine-5'-monophosphate (dUMP) to 2'-deoxythymidine-5'-monophosphate (dTMP) while utilizing 5,10-methylenetetrahydrofolate (mTHF) as the methyl donor and reductant in the reaction, yielding dihydrofolate (DHF) as a by-product. This enzymatic reaction provides an intracellular de novo source of dTMP, an essential precursor for DNA biosynthesis. The sequence is that of Thymidylate synthase from Polynucleobacter asymbioticus (strain DSM 18221 / CIP 109841 / QLW-P1DMWA-1) (Polynucleobacter necessarius subsp. asymbioticus).